We begin with the raw amino-acid sequence, 230 residues long: MAGCLRHFTSVGDDTKKKAWKEEDVEVAHEEEPKNTPHPFIASYSFRGALKWLFSSHKFQIVIICLVILDALFVLVEVLLDLELLAEKVDHIIPEIFHYLSISVLSFFILEIAGKLYAFRLEFFHHKFEVFDAAIVVISFIIDIVYISREDIFNAVGLLILLRLWRVARIVNGIIVSVKTQAEDKIHRLKENQESLLEKVAHLEQQCAQQEQEIVRLQTLLQQHNVFPAS.

Residues 1–58 (MAGCLRHFTSVGDDTKKKAWKEEDVEVAHEEEPKNTPHPFIASYSFRGALKWLFSSHK) lie on the Cytoplasmic side of the membrane. Residues 59-79 (FQIVIICLVILDALFVLVEVL) traverse the membrane as a helical segment. The Extracellular portion of the chain corresponds to 80–96 (LDLELLAEKVDHIIPEI). The chain crosses the membrane as a helical span at residues 97–119 (FHYLSISVLSFFILEIAGKLYAF). The Cytoplasmic portion of the chain corresponds to 120–127 (RLEFFHHK). The helical transmembrane segment at 128–148 (FEVFDAAIVVISFIIDIVYIS) threads the bilayer. At 149–155 (REDIFNA) the chain is on the extracellular side. Residues 156–176 (VGLLILLRLWRVARIVNGIIV) traverse the membrane as a helical segment. A coiled-coil region spans residues 177–226 (SVKTQAEDKIHRLKENQESLLEKVAHLEQQCAQQEQEIVRLQTLLQQHNV). Over 177–230 (SVKTQAEDKIHRLKENQESLLEKVAHLEQQCAQQEQEIVRLQTLLQQHNVFPAS) the chain is Cytoplasmic.

The protein belongs to the hydrogen channel family. In terms of assembly, homodimer.

It localises to the membrane. The protein resides in the cell membrane. Mediates the voltage-dependent proton permeability of excitable membranes. Forms a proton-selective channel through which protons may pass in accordance with their electrochemical gradient. The sequence is that of Voltage-gated hydrogen channel 1 (hvcn1) from Xenopus tropicalis (Western clawed frog).